Here is a 144-residue protein sequence, read N- to C-terminus: 3-hydroxyacyl-[acyl-carrier-protein] dehydratase FabZ (144 aa).

His-52 is an active-site residue.

This sequence belongs to the thioester dehydratase family. FabZ subfamily.

It is found in the cytoplasm. The catalysed reaction is a (3R)-hydroxyacyl-[ACP] = a (2E)-enoyl-[ACP] + H2O. Involved in unsaturated fatty acids biosynthesis. Catalyzes the dehydration of short chain beta-hydroxyacyl-ACPs and long chain saturated and unsaturated beta-hydroxyacyl-ACPs. In Syntrophomonas wolfei subsp. wolfei (strain DSM 2245B / Goettingen), this protein is 3-hydroxyacyl-[acyl-carrier-protein] dehydratase FabZ.